We begin with the raw amino-acid sequence, 293 residues long: Ribosomal protein L11 methyltransferase (293 aa).

S-adenosyl-L-methionine contacts are provided by Thr-145, Gly-166, Asp-188, and Asn-230.

The protein belongs to the methyltransferase superfamily. PrmA family.

It is found in the cytoplasm. The catalysed reaction is L-lysyl-[protein] + 3 S-adenosyl-L-methionine = N(6),N(6),N(6)-trimethyl-L-lysyl-[protein] + 3 S-adenosyl-L-homocysteine + 3 H(+). Methylates ribosomal protein L11. In Yersinia pseudotuberculosis serotype I (strain IP32953), this protein is Ribosomal protein L11 methyltransferase.